Consider the following 171-residue polypeptide: Large ribosomal subunit protein bL9 (171 aa).

Belongs to the bacterial ribosomal protein bL9 family.

In terms of biological role, binds to the 23S rRNA. The sequence is that of Large ribosomal subunit protein bL9 from Rickettsia canadensis (strain McKiel).